A 191-amino-acid polypeptide reads, in one-letter code: Chromobox protein homolog 5 (191 aa).

S11, S12, S13, and S14 each carry phosphoserine. Residues 20-78 (YVVEKVLDRRVVKGQVEYLLKWKGFSEEHNTWEPEKNLDCPELISEFMKKYKKMKEGEN) enclose the Chromo 1 domain. K32 participates in a covalent cross-link: Glycyl lysine isopeptide (Lys-Gly) (interchain with G-Cter in SUMO2). K40 carries the N6-acetyllysine modification. The tract at residues 70-117 (YKKMKEGENNKPREKSESNKRKSNFSNSADDIKSKKKREQSNDIARGF) is disordered. A compositionally biased stretch (basic and acidic residues) spans 73–89 (MKEGENNKPREKSESNK). K91 participates in a covalent cross-link: Glycyl lysine isopeptide (Lys-Gly) (interchain with G-Cter in SUMO2). Phosphoserine occurs at positions 92, 95, and 97. Glycyl lysine isopeptide (Lys-Gly) (interchain with G-Cter in SUMO2) cross-links involve residues K102, K106, K154, and K184. The 59-residue stretch at 121-179 (LEPEKIIGATDSCGDLMFLMKWKDTDEADLVLAKEANVKCPQIVIAFYEERLTWHAYPE) folds into the Chromo 2; shadow subtype domain.

As to quaternary structure, homodimer. Interacts with histone H3 methylated at 'Lys-9'. Interacts (via Chromo 2; shadow subtype domain) with the MIS12 complex subunit NSL1; the interaction is direct, involves dimeric CBX5, and occurs during interphase. Interacts with POGZ; POGZ and PXVXL motif-containing proteins such as INCENP and TRIM28 compete for interaction with CBX5. Interacts with LRIF1 (via PxVxL motif). Interacts with INCENP. Interacts with TRIM24. Interacts (via the chromoshadow domain) with ATRX; the interaction is direct. Interacts (via the chromoshadow domain) with CHAF1A; the interaction is direct. Interacts (via the chromoshadow domain) with LBR; the interaction is direct. Interacts (via the chromoshadow domain) with NIPBL; the interaction is direct. Interacts (via the chromoshadow domain) with SP100; the interaction is direct. Interacts (via the chromoshadow domain) with STAM2; the interaction is direct. Interacts (via the chromoshadow domain) with TRIM28; the interaction is direct. Interacts (via the chromoshadow domain) with CBX3; the interaction is direct. Interacts with PRR14 (via N-terminus). Interacts with RRP1B. Interacts with HNRNPU (via C-terminus); this interaction is, at least in part, RNA-dependent. Interacts with ZNF263; recruited to the SIX3 promoter along with other proteins involved in chromatin modification and transcriptional corepression where it contributes to transcriptional repression. Interacts with AURKB during mitosis. Interacts with CHAMP1. Interacts with BAHD1. Interacts with HP1BP3. Interacts with CHD3. Interacts with CHD4. Interacts with SMYD5. Interacts with KMT5B. Interacts with KMT5C. In terms of assembly, (Microbial infection) Interacts with JC virus agnoprotein; this interaction induces the dissociation of CBX5 from LBR, resulting in destabilization of the nuclear envelope. In terms of processing, phosphorylation of HP1 and LBR may be responsible for some of the alterations in chromatin organization and nuclear structure which occur at various times during the cell cycle. Phosphorylated during interphase and possibly hyper-phosphorylated during mitosis. Ubiquitinated.

The protein resides in the nucleus. The protein localises to the chromosome. Its subcellular location is the centromere. Functionally, component of heterochromatin that recognizes and binds histone H3 tails methylated at 'Lys-9' (H3K9me), leading to epigenetic repression. In contrast, it is excluded from chromatin when 'Tyr-41' of histone H3 is phosphorylated (H3Y41ph). May contribute to the association of heterochromatin with the inner nuclear membrane by interactions with the lamin-B receptor (LBR). Involved in the formation of kinetochore through interaction with the MIS12 complex subunit NSL1. Required for the formation of the inner centromere. The chain is Chromobox protein homolog 5 (CBX5) from Homo sapiens (Human).